Reading from the N-terminus, the 294-residue chain is 4-hydroxy-tetrahydrodipicolinate synthase (294 aa).

Thr47 contacts pyruvate. The active-site Proton donor/acceptor is Tyr135. Catalysis depends on Lys163, which acts as the Schiff-base intermediate with substrate. Thr205 is a binding site for pyruvate.

This sequence belongs to the DapA family. As to quaternary structure, homotetramer; dimer of dimers.

It localises to the cytoplasm. The catalysed reaction is L-aspartate 4-semialdehyde + pyruvate = (2S,4S)-4-hydroxy-2,3,4,5-tetrahydrodipicolinate + H2O + H(+). The protein operates within amino-acid biosynthesis; L-lysine biosynthesis via DAP pathway; (S)-tetrahydrodipicolinate from L-aspartate: step 3/4. Its function is as follows. Catalyzes the condensation of (S)-aspartate-beta-semialdehyde [(S)-ASA] and pyruvate to 4-hydroxy-tetrahydrodipicolinate (HTPA). In Rickettsia peacockii (strain Rustic), this protein is 4-hydroxy-tetrahydrodipicolinate synthase.